The following is a 682-amino-acid chain: Potassium-transporting ATPase ATP-binding subunit (682 aa).

Helical transmembrane passes span 34–54 (PVMF…IAMA), 62–82 (ALFS…ANFA), 219–239 (IALT…TATL), and 254–274 (VLVA…LSAI). Residue aspartate 307 is the 4-aspartylphosphate intermediate of the active site. Residues aspartate 344, glutamate 348, 377–384 (FTAQSRMS), and lysine 395 contribute to the ATP site. 2 residues coordinate Mg(2+): aspartate 518 and aspartate 522. The next 3 helical transmembrane spans lie at 588 to 608 (FAII…LNIM), 616 to 636 (AILS…PLAL), and 656 to 676 (IYGL…DLLL).

It belongs to the cation transport ATPase (P-type) (TC 3.A.3) family. Type IA subfamily. In terms of assembly, the system is composed of three essential subunits: KdpA, KdpB and KdpC.

Its subcellular location is the cell inner membrane. The catalysed reaction is K(+)(out) + ATP + H2O = K(+)(in) + ADP + phosphate + H(+). Its function is as follows. Part of the high-affinity ATP-driven potassium transport (or Kdp) system, which catalyzes the hydrolysis of ATP coupled with the electrogenic transport of potassium into the cytoplasm. This subunit is responsible for energy coupling to the transport system and for the release of the potassium ions to the cytoplasm. The chain is Potassium-transporting ATPase ATP-binding subunit from Escherichia coli O17:K52:H18 (strain UMN026 / ExPEC).